Consider the following 605-residue polypeptide: Elongation factor 4 (605 aa).

The region spanning 9–192 (CRIRNFCIIA…SIVHRIPPPA (184 aa)) is the tr-type G domain. Residues 21 to 26 (DHGKST) and 139 to 142 (NKID) each bind GTP.

The protein belongs to the TRAFAC class translation factor GTPase superfamily. Classic translation factor GTPase family. LepA subfamily.

The protein localises to the cell inner membrane. It carries out the reaction GTP + H2O = GDP + phosphate + H(+). Required for accurate and efficient protein synthesis under certain stress conditions. May act as a fidelity factor of the translation reaction, by catalyzing a one-codon backward translocation of tRNAs on improperly translocated ribosomes. Back-translocation proceeds from a post-translocation (POST) complex to a pre-translocation (PRE) complex, thus giving elongation factor G a second chance to translocate the tRNAs correctly. Binds to ribosomes in a GTP-dependent manner. In Chlorobium chlorochromatii (strain CaD3), this protein is Elongation factor 4.